Consider the following 116-residue polypeptide: uncharacterized protein (116 aa).

2 consecutive transmembrane segments (helical) span residues 55–77 (LSYS…LYSF) and 87–109 (FSYG…YAAL).

The protein resides in the membrane. This is an uncharacterized protein from Saccharomyces cerevisiae (strain ATCC 204508 / S288c) (Baker's yeast).